We begin with the raw amino-acid sequence, 446 residues long: FAD-dependent monooxygenase eupB (446 aa).

The helical transmembrane segment at 10–30 threads the bilayer; the sequence is EPHIAIVGGGIVGVILTLGLL. N33 carries N-linked (GlcNAc...) asparagine glycosylation. FAD contacts are provided by E40, A53, and R125. Catalysis depends on residues R206 and Y239. Residue N243 is glycosylated (N-linked (GlcNAc...) asparagine). Residues D322 and A335 each contribute to the FAD site. Residue N395 is glycosylated (N-linked (GlcNAc...) asparagine).

This sequence belongs to the paxM FAD-dependent monooxygenase family. Requires FAD as cofactor.

The protein resides in the membrane. Its pathway is secondary metabolite biosynthesis; terpenoid biosynthesis. In terms of biological role, FAD-dependent monooxygenase; part of the gene cluster that mediates the biosynthesis of eupenifeldin, a bistropolone meroterpenoid that acts as an antitumor agent. The first step of eupenifeldin biosynthesis is the biosynthesis of 3-methylorcinaldehyde performed by the non-reducing polyketide synthase eupA. Oxidative dearomatization of 3-methylorcinaldehyde likely catalyzed by the FAD-dependent monooxygenase eupB is followed by oxidative ring expansion by the 2-oxoglutarate-dependent dioxygenase eupC to provide the first tropolone metabolite, tropolone stipitaldehyde. In parallel, generation of sesquiterpene alpha-humulene from farnesylpyrophosphate (FPP) is catalyzed by the terpene cyclase eupE. The cytochrome P450 monooxygenase eupD then hydroxylates humulene to humulenol. The putative Diels-Alderase eupF probably catalyzes the formation of the tropolone-humulene skeleton by linking humulenol and the polyketide moiety. The short-chain dehydrogenase/reductase eupG and the flavin-dependent monooxygenase eupH are also essential for eupenifeldin biosynthesis and are likely the additional decorating enzymes of the tropolone-humulene skeleton to produce final eupenifeldin or derivatives. This is FAD-dependent monooxygenase eupB from Phoma sp.